The chain runs to 153 residues: Transcriptional repressor NrdR (153 aa).

A zinc finger spans residues C3 to C34. Residues L49 to V139 enclose the ATP-cone domain.

This sequence belongs to the NrdR family. Requires Zn(2+) as cofactor.

Functionally, negatively regulates transcription of bacterial ribonucleotide reductase nrd genes and operons by binding to NrdR-boxes. The polypeptide is Transcriptional repressor NrdR (Bacillus cytotoxicus (strain DSM 22905 / CIP 110041 / 391-98 / NVH 391-98)).